Here is a 139-residue protein sequence, read N- to C-terminus: Large ribosomal subunit protein uL16 (139 aa).

Positions 1–17 are enriched in basic residues; it reads MLQPKRTKYRKQQKGRM. The disordered stretch occupies residues 1–25; sequence MLQPKRTKYRKQQKGRMKGLSQRGH.

It belongs to the universal ribosomal protein uL16 family. In terms of assembly, part of the 50S ribosomal subunit.

Binds 23S rRNA and is also seen to make contacts with the A and possibly P site tRNAs. The sequence is that of Large ribosomal subunit protein uL16 from Christiangramia forsetii (strain DSM 17595 / CGMCC 1.15422 / KT0803) (Gramella forsetii).